A 396-amino-acid polypeptide reads, in one-letter code: Putative nickel insertion protein (396 aa).

The protein belongs to the LarC family.

The chain is Putative nickel insertion protein from Wolinella succinogenes (strain ATCC 29543 / DSM 1740 / CCUG 13145 / JCM 31913 / LMG 7466 / NCTC 11488 / FDC 602W) (Vibrio succinogenes).